A 115-amino-acid chain; its full sequence is NADH-ubiquinone oxidoreductase chain 3 (115 aa).

3 consecutive transmembrane segments (helical) span residues 4 to 24, 55 to 75, and 87 to 107; these read LTAL…AFWL, FFLV…LLPL, and MMLT…YEWM.

It belongs to the complex I subunit 3 family. In terms of assembly, core subunit of respiratory chain NADH dehydrogenase (Complex I) which is composed of 45 different subunits. Interacts with TMEM186. Interacts with TMEM242.

The protein resides in the mitochondrion inner membrane. It catalyses the reaction a ubiquinone + NADH + 5 H(+)(in) = a ubiquinol + NAD(+) + 4 H(+)(out). Core subunit of the mitochondrial membrane respiratory chain NADH dehydrogenase (Complex I) which catalyzes electron transfer from NADH through the respiratory chain, using ubiquinone as an electron acceptor. Essential for the catalytic activity of complex I. This is NADH-ubiquinone oxidoreductase chain 3 from Peromyscus boylii (Brush deermouse).